We begin with the raw amino-acid sequence, 540 residues long: Chaperonin GroEL 4 (540 aa).

ATP contacts are provided by residues 29 to 32 (TLGP), 86 to 90 (DGTTT), glycine 413, 477 to 479 (NAA), and aspartate 493.

Belongs to the chaperonin (HSP60) family. Forms a cylinder of 14 subunits composed of two heptameric rings stacked back-to-back. Interacts with the co-chaperonin GroES.

Its subcellular location is the cytoplasm. The enzyme catalyses ATP + H2O + a folded polypeptide = ADP + phosphate + an unfolded polypeptide.. Its function is as follows. Together with its co-chaperonin GroES, plays an essential role in assisting protein folding. The GroEL-GroES system forms a nano-cage that allows encapsulation of the non-native substrate proteins and provides a physical environment optimized to promote and accelerate protein folding. In Frankia alni (strain DSM 45986 / CECT 9034 / ACN14a), this protein is Chaperonin GroEL 4.